Here is a 453-residue protein sequence, read N- to C-terminus: MGVKTFTHSSSSHSQEMLGKLNMLRNDGHFCDITIRVQDKIFRAHKVVLAACSDFFRTKLVGQTEDENKNVLDLHHVTVTGFIPLLEYAYTATLSINTENIIDVLAAASYMQMFSVASTCSEFMKSSILWNTPNSQPEKSLDAGQENSSNCNFTSRDGSISPVSSECSAVERTIPVCRESRRKRKSYIVMSPESPVKCSTQTSSPQVLNSSASYAENRSQPVDSSLAFPWTFPFGIDRRIQPEKAKQAENTRTLELPGPSEAGRRVADYVTCESTKPTLPLGTEEDVRVKVERLSDEEVHEEVSQPVSASQSSLSDQQTVPGSEPVQEDLLISPQSSSIGSVDEGVTEGLPTLQSTSSTNAHADDDDRLENVQYPYQLYIAPSTSSTERPSPNGPDRPFQCPTCGVRFTRIQNLKQHMLIHSGIKPFQCDCCGKKFTRAYSLKMHRLKHEVIS.

Residue Lys-4 forms a Glycyl lysine isopeptide (Lys-Gly) (interchain with G-Cter in SUMO2) linkage. In terms of domain architecture, BTB spans 31–98 (CDITIRVQDK…AYTATLSINT (68 aa)). Ser-135 carries the phosphoserine modification. Positions 135–157 (SQPEKSLDAGQENSSNCNFTSRD) are disordered. Over residues 145–157 (QENSSNCNFTSRD) the composition is skewed to polar residues. Residues Ser-159, Ser-161, Ser-165, Ser-191, Ser-194, and Ser-199 each carry the phosphoserine modification. At Thr-200 the chain carries Phosphothreonine. The tract at residues 241–266 (QPEKAKQAENTRTLELPGPSEAGRRV) is disordered. A Glycyl lysine isopeptide (Lys-Gly) (interchain with G-Cter in SUMO2) cross-link involves residue Lys-290. Disordered regions lie at residues 295–324 (SDEE…PGSE) and 336–366 (SSSI…ADDD). The segment covering 304-318 (SQPVSASQSSLSDQQ) has biased composition (low complexity). A compositionally biased stretch (polar residues) spans 352–361 (TLQSTSSTNA). C2H2-type zinc fingers lie at residues 399–421 (FQCP…MLIH) and 427–449 (FQCD…RLKH).

The protein localises to the nucleus. The protein is Zinc finger and BTB domain-containing protein 44 (Zbtb44) of Mus musculus (Mouse).